The chain runs to 186 residues: MKRLIFMGPPGAGKGTQADIIKEKYNIPQISTGDILRAAVKNGTAMGIEAKKYMDAGDLVPDAVVIGIIRDRLVEADCANGFILDGFPRTVEQAKALSEILKELHMELDSVVNLDVPDEELVKRLLGRAIKEGRSDDNEETIKNRLHTYNTKTLPLIDFYKATGILRQINGLGSMEEITNTILKSI.

Residue 11-16 (GAGKGT) participates in ATP binding. The tract at residues 31–60 (STGDILRAAVKNGTAMGIEAKKYMDAGDLV) is NMP. AMP-binding positions include Thr32, Arg37, 58–60 (DLV), 86–89 (GFPR), and Gln93. The interval 127–137 (GRAIKEGRSDD) is LID. Position 128 (Arg128) interacts with ATP. AMP-binding residues include Arg134 and Arg145. Residue Gly173 coordinates ATP.

The protein belongs to the adenylate kinase family. As to quaternary structure, monomer.

The protein resides in the cytoplasm. The catalysed reaction is AMP + ATP = 2 ADP. The protein operates within purine metabolism; AMP biosynthesis via salvage pathway; AMP from ADP: step 1/1. Its function is as follows. Catalyzes the reversible transfer of the terminal phosphate group between ATP and AMP. Plays an important role in cellular energy homeostasis and in adenine nucleotide metabolism. The chain is Adenylate kinase from Leptospira biflexa serovar Patoc (strain Patoc 1 / Ames).